A 379-amino-acid polypeptide reads, in one-letter code: Probable leucine aminopeptidase TRV_05286 (379 aa).

Residues 1-18 form the signal peptide; the sequence is MKIATLAVVSAFAATAIA. H182 and D201 together coordinate Zn(2+). N202 and N226 each carry an N-linked (GlcNAc...) asparagine glycan. E240 and D267 together coordinate Zn(2+). C312 and C316 are oxidised to a cystine. H345 is a binding site for Zn(2+).

It belongs to the peptidase M28 family. M28E subfamily. As to quaternary structure, monomer. Requires Zn(2+) as cofactor.

It is found in the secreted. In terms of biological role, probable extracellular aminopeptidase which contributes to pathogenicity. The polypeptide is Probable leucine aminopeptidase TRV_05286 (Trichophyton verrucosum (strain HKI 0517)).